Reading from the N-terminus, the 417-residue chain is MASSKLREPVDEVFDLDLAVPETTRLDSSLHKARAQLLVKGRRHRPSRSRLRDSTSSAEDGEGSDGPGGKVTDGCGSPLHRLRSPLHSGPGSPAGGSFCLEPPGLRRSLDEDEPPPSPLARYRPLHNAASHEGLAATSGSPPRSAPSSDSSPSFVRRYPRAEPHSEDDSRDASPPEPASPTIGLDKKTRRKFLDLGVTLRRASTSKSRKEKGSNRLSMGSRESVEGSGRTGGSPFLPFSWFTDSGKGSASSGSTTSPTCSPKHEGFSPKKSASQESTLSDDSTPPSSSPKIPGDPRQETKCSYPYHTLSQSSDEFLDESLPAVEHWTSQQVGQWLHSLNLEQYAAEFAARQVDGPQLLQLDGSKLKSLGLSNSHDRALVKRKLKELAAAAEKERKAQEKTARQREKLRRREHEAKKS.

The disordered stretch occupies residues 37-306; it reads LLVKGRRHRP…QETKCSYPYH (270 aa). Residues 40–49 show a composition bias toward basic residues; that stretch reads KGRRHRPSRS. A phosphoserine mark is found at Ser-84 and Ser-108. A compositionally biased stretch (low complexity) spans 138-153; it reads SGSPPRSAPSSDSSPS. Residues 159-173 show a composition bias toward basic and acidic residues; that stretch reads PRAEPHSEDDSRDAS. A phosphoserine mark is found at Ser-173 and Ser-179. 2 stretches are compositionally biased toward low complexity: residues 244-260 and 276-289; these read SGKG…PTCS and STLS…SSSP. Phosphoserine is present on Ser-279. Position 283 is a phosphothreonine (Thr-283). Residues 326 to 389 form the SAM domain; sequence WTSQQVGQWL…KRKLKELAAA (64 aa). Residues 375-416 adopt a coiled-coil conformation; the sequence is DRALVKRKLKELAAAAEKERKAQEKTARQREKLRRREHEAKK. A disordered region spans residues 390–417; that stretch reads AEKERKAQEKTARQREKLRRREHEAKKS.

This is Sterile alpha motif domain-containing protein 14 (Samd14) from Rattus norvegicus (Rat).